The chain runs to 352 residues: N-acetyl-gamma-glutamyl-phosphate reductase (352 aa).

It belongs to the NAGSA dehydrogenase family. Type 1 subfamily.

Its subcellular location is the cytoplasm. The catalysed reaction is N-acetyl-L-glutamate 5-semialdehyde + phosphate + NADP(+) = N-acetyl-L-glutamyl 5-phosphate + NADPH + H(+). It functions in the pathway amino-acid biosynthesis; L-arginine biosynthesis; N(2)-acetyl-L-ornithine from L-glutamate: step 3/4. In terms of biological role, catalyzes the NADPH-dependent reduction of N-acetyl-5-glutamyl phosphate to yield N-acetyl-L-glutamate 5-semialdehyde. The sequence is that of N-acetyl-gamma-glutamyl-phosphate reductase from Nostoc ellipsosporum.